Reading from the N-terminus, the 795-residue chain is Phenylalanine--tRNA ligase beta subunit (795 aa).

The region spanning 39–148 (AGAFHGVVVG…ADAPLGTDIR (110 aa)) is the tRNA-binding domain. The 76-residue stretch at 401–476 (PARATIALRR…RVYGYNNIPN (76 aa)) folds into the B5 domain. Asp454, Asp460, Glu463, and Glu464 together coordinate Mg(2+). The FDX-ACB domain occupies 701–794 (SRFPANRRDI…LKQRFQASLR (94 aa)).

Belongs to the phenylalanyl-tRNA synthetase beta subunit family. Type 1 subfamily. In terms of assembly, tetramer of two alpha and two beta subunits. Mg(2+) is required as a cofactor.

The protein localises to the cytoplasm. It catalyses the reaction tRNA(Phe) + L-phenylalanine + ATP = L-phenylalanyl-tRNA(Phe) + AMP + diphosphate + H(+). This Dickeya dadantii (strain 3937) (Erwinia chrysanthemi (strain 3937)) protein is Phenylalanine--tRNA ligase beta subunit (pheT).